We begin with the raw amino-acid sequence, 631 residues long: 1-deoxy-D-xylulose-5-phosphate synthase (631 aa).

Residues histidine 73 and 114–116 each bind thiamine diphosphate; that span reads GHS. Aspartate 145 contributes to the Mg(2+) binding site. Thiamine diphosphate is bound by residues 146–147, asparagine 174, tyrosine 285, and glutamate 366; that span reads GA. Asparagine 174 is a binding site for Mg(2+).

This sequence belongs to the transketolase family. DXPS subfamily. In terms of assembly, homodimer. The cofactor is Mg(2+). Requires thiamine diphosphate as cofactor.

The catalysed reaction is D-glyceraldehyde 3-phosphate + pyruvate + H(+) = 1-deoxy-D-xylulose 5-phosphate + CO2. It functions in the pathway metabolic intermediate biosynthesis; 1-deoxy-D-xylulose 5-phosphate biosynthesis; 1-deoxy-D-xylulose 5-phosphate from D-glyceraldehyde 3-phosphate and pyruvate: step 1/1. Catalyzes the acyloin condensation reaction between C atoms 2 and 3 of pyruvate and glyceraldehyde 3-phosphate to yield 1-deoxy-D-xylulose-5-phosphate (DXP). The sequence is that of 1-deoxy-D-xylulose-5-phosphate synthase from Desulfitobacterium hafniense (strain Y51).